Consider the following 118-residue polypeptide: Large ribosomal subunit protein bL20 (118 aa).

Belongs to the bacterial ribosomal protein bL20 family.

Binds directly to 23S ribosomal RNA and is necessary for the in vitro assembly process of the 50S ribosomal subunit. It is not involved in the protein synthesizing functions of that subunit. This Campylobacter curvus (strain 525.92) protein is Large ribosomal subunit protein bL20.